A 435-amino-acid chain; its full sequence is uncharacterized protein (435 aa).

One can recognise an F-box domain in the interval 7-58; the sequence is PFPITKLPLVPRCKILKFFDYGDLLDISLCSKRMAQTVRDIHITADLHYLTL.

This is an uncharacterized protein from Caenorhabditis elegans.